The sequence spans 210 residues: Outer-membrane lipoprotein LolB (210 aa).

Residues 1–18 form the signal peptide; it reads MKKFTKILSLSTLLFLAG. A lipid anchor (N-palmitoyl cysteine) is attached at Cys-19. Cys-19 is lipidated: S-diacylglycerol cysteine.

This sequence belongs to the LolB family. As to quaternary structure, monomer.

It is found in the cell outer membrane. Functionally, plays a critical role in the incorporation of lipoproteins in the outer membrane after they are released by the LolA protein. The polypeptide is Outer-membrane lipoprotein LolB (Actinobacillus pleuropneumoniae serotype 5b (strain L20)).